The following is a 314-amino-acid chain: Olfactory receptor 5G9 (314 aa).

At 1 to 25 the chain is on the extracellular side; it reads MADENYTRITEFIFIGLRYHPNLQV. A glycan (N-linked (GlcNAc...) asparagine) is linked at N5. A helical transmembrane segment spans residues 26–46; the sequence is FLFLLFLLFYLVTMTGNLGMI. Residues 47-54 lie on the Cytoplasmic side of the membrane; it reads ILIRVDSR. Residues 55–75 form a helical membrane-spanning segment; that stretch reads LHTPMYFFLSHLSFVDICFSS. Residues 76-99 are Extracellular-facing; it reads VVAPKMLTDFFADKKAISFLGCVL. Cysteines 97 and 189 form a disulfide. Residues 100 to 120 traverse the membrane as a helical segment; the sequence is QQWFFGFFVAIECLLLASMAY. Residues 121–133 are Cytoplasmic-facing; it reads DRYVAICNPLLYS. The helical transmembrane segment at 134 to 154 threads the bilayer; sequence VAMSQRLCIQLVIGPYAVGFF. Topologically, residues 155-196 are extracellular; sequence NTMTHTTAAFRLPFCGSNIINHFFCDMSPILSLICADIRINK. The chain crosses the membrane as a helical span at residues 197–217; the sequence is LLVFIVAGAVLIVSSTTIIVS. Residues 218–237 are Cytoplasmic-facing; it reads YFHILIAILRIRSAEGRRKA. A helical transmembrane segment spans residues 238-258; it reads FSTCSSHVTAVSILYGTLFFI. At 259–271 the chain is on the extracellular side; sequence YVRPSAISSLDLN. A helical transmembrane segment spans residues 272 to 292; that stretch reads KVVSVFYTAVIPMLNPLIYSL. Topologically, residues 293–314 are cytoplasmic; that stretch reads RNKEVKSAMGRTVAKAKVFLKN.

It belongs to the G-protein coupled receptor 1 family.

It localises to the cell membrane. In terms of biological role, potential odorant receptor. This chain is Olfactory receptor 5G9, found in Mus musculus (Mouse).